The primary structure comprises 158 residues: NAD(P)H-quinone oxidoreductase subunit J, chloroplastic (158 aa).

The protein belongs to the complex I 30 kDa subunit family. As to quaternary structure, NDH is composed of at least 16 different subunits, 5 of which are encoded in the nucleus.

Its subcellular location is the plastid. The protein localises to the chloroplast thylakoid membrane. The enzyme catalyses a plastoquinone + NADH + (n+1) H(+)(in) = a plastoquinol + NAD(+) + n H(+)(out). It carries out the reaction a plastoquinone + NADPH + (n+1) H(+)(in) = a plastoquinol + NADP(+) + n H(+)(out). NDH shuttles electrons from NAD(P)H:plastoquinone, via FMN and iron-sulfur (Fe-S) centers, to quinones in the photosynthetic chain and possibly in a chloroplast respiratory chain. The immediate electron acceptor for the enzyme in this species is believed to be plastoquinone. Couples the redox reaction to proton translocation, and thus conserves the redox energy in a proton gradient. In Crucihimalaya wallichii (Rock-cress), this protein is NAD(P)H-quinone oxidoreductase subunit J, chloroplastic.